The primary structure comprises 247 residues: tRNA uridine(34) hydroxylase (247 aa).

The region spanning 124-218 is the Rhodanese domain; sequence TKQNVILIDT…YLEDTHNKNN (95 aa). Residue C178 is the Cysteine persulfide intermediate of the active site.

The protein belongs to the TrhO family.

It catalyses the reaction uridine(34) in tRNA + AH2 + O2 = 5-hydroxyuridine(34) in tRNA + A + H2O. Functionally, catalyzes oxygen-dependent 5-hydroxyuridine (ho5U) modification at position 34 in tRNAs. The sequence is that of tRNA uridine(34) hydroxylase from Rickettsia prowazekii (strain Madrid E).